The chain runs to 213 residues: Adenylate kinase (213 aa).

ATP is bound at residue 10 to 15 (GSGKGT). The tract at residues 30-59 (SVGDLLRNIISSESKLGKGIKDTVESGNLI) is NMP. Residues arginine 36, 57–59 (NLI), 83–86 (GFPR), and glutamine 90 contribute to the AMP site. The segment at 125–160 (DRLTCLDCKSIYSISSFKNTTCAKCKSTRLEKRIDD) is LID. Residue arginine 126 coordinates ATP. Cysteine 129 and cysteine 132 together coordinate Zn(2+). 135-136 (IY) contributes to the ATP binding site. 2 residues coordinate Zn(2+): cysteine 146 and cysteine 149. AMP-binding residues include arginine 157 and arginine 169. Leucine 195 contacts ATP.

This sequence belongs to the adenylate kinase family. In terms of assembly, monomer.

It is found in the cytoplasm. The enzyme catalyses AMP + ATP = 2 ADP. The protein operates within purine metabolism; AMP biosynthesis via salvage pathway; AMP from ADP: step 1/1. Functionally, catalyzes the reversible transfer of the terminal phosphate group between ATP and AMP. Plays an important role in cellular energy homeostasis and in adenine nucleotide metabolism. In Wolbachia pipientis subsp. Culex pipiens (strain wPip), this protein is Adenylate kinase.